The following is a 144-amino-acid chain: Prefoldin subunit alpha (144 aa).

Belongs to the prefoldin subunit alpha family. As to quaternary structure, heterohexamer of two alpha and four beta subunits.

Its subcellular location is the cytoplasm. Molecular chaperone capable of stabilizing a range of proteins. Seems to fulfill an ATP-independent, HSP70-like function in archaeal de novo protein folding. The sequence is that of Prefoldin subunit alpha from Methanococcus maripaludis (strain DSM 14266 / JCM 13030 / NBRC 101832 / S2 / LL).